A 214-amino-acid polypeptide reads, in one-letter code: Adenylate kinase (214 aa).

12–17 (GVGKGT) contacts ATP. The tract at residues 32-61 (STGNIFRSQIASNSELGIKLKEIVESGGYV) is NMP. AMP-binding positions include T33, R38, 59 to 61 (GYV), 88 to 91 (GYPR), and Q95. Positions 126–163 (GRRICPSCNAQYHIYFKKSKLDTKCEIDQSELIQRKDD) are LID. Position 127 (R127) interacts with ATP. Residues C130, C133, C150, and D153 each coordinate Zn(2+). AMP-binding residues include R160 and R171. Residue K199 participates in ATP binding.

It belongs to the adenylate kinase family. As to quaternary structure, monomer.

It is found in the cytoplasm. The catalysed reaction is AMP + ATP = 2 ADP. Its pathway is purine metabolism; AMP biosynthesis via salvage pathway; AMP from ADP: step 1/1. In terms of biological role, catalyzes the reversible transfer of the terminal phosphate group between ATP and AMP. Plays an important role in cellular energy homeostasis and in adenine nucleotide metabolism. This Mycoplasmopsis pulmonis (strain UAB CTIP) (Mycoplasma pulmonis) protein is Adenylate kinase.